Reading from the N-terminus, the 137-residue chain is Competence protein D (137 aa).

Functionally, involved in transformation (genetic competence for DNA uptake). In Haemophilus influenzae (strain ATCC 51907 / DSM 11121 / KW20 / Rd), this protein is Competence protein D (comD).